We begin with the raw amino-acid sequence, 281 residues long: MIETLLPASALAFPAIDPVIFRVGPLAVHWYGLGYVVGILFAWWYGKKLLRSHRLWANNQPPMAPEALDDFVIWAALGVVLGGRIGYVLFYNFSYYISNPLAIPALWDGGMSFHGGILGTTLAMILFARSRGILVWSMFDTIAAGVPIGLGVVRVANFINSELWGRVSDVPWAVYFPNGGPLPRHPSQLYEAFLEGLVLFFVLFVLVWGARKLKQPGFVAGAFVTGYGLSRIAVEFFREPDAQIGYLFGGWLTMGMVLSVPMVLLGLWAMWRANRAAARNA.

The next 4 helical transmembrane spans lie at 23 to 43 (VGPLAVHWYGLGYVVGILFAW), 71 to 91 (FVIWAALGVVLGGRIGYVLFY), 107 to 127 (WDGGMSFHGGILGTTLAMILF), and 133 to 153 (ILVWSMFDTIAAGVPIGLGVV). Position 154 (arginine 154) interacts with a 1,2-diacyl-sn-glycero-3-phospho-(1'-sn-glycerol). Helical transmembrane passes span 189 to 209 (LYEAFLEGLVLFFVLFVLVWG), 217 to 237 (GFVAGAFVTGYGLSRIAVEFF), and 247 to 267 (LFGGWLTMGMVLSVPMVLLGL).

This sequence belongs to the Lgt family.

It is found in the cell inner membrane. It catalyses the reaction L-cysteinyl-[prolipoprotein] + a 1,2-diacyl-sn-glycero-3-phospho-(1'-sn-glycerol) = an S-1,2-diacyl-sn-glyceryl-L-cysteinyl-[prolipoprotein] + sn-glycerol 1-phosphate + H(+). The protein operates within protein modification; lipoprotein biosynthesis (diacylglyceryl transfer). Catalyzes the transfer of the diacylglyceryl group from phosphatidylglycerol to the sulfhydryl group of the N-terminal cysteine of a prolipoprotein, the first step in the formation of mature lipoproteins. The chain is Phosphatidylglycerol--prolipoprotein diacylglyceryl transferase from Brucella abortus (strain S19).